The sequence spans 422 residues: Dihydrolipoyllysine-residue succinyltransferase component of 2-oxoglutarate dehydrogenase complex (422 aa).

In terms of domain architecture, Lipoyl-binding spans Met1–Gly76. The residue at position 42 (Lys42) is an N6-lipoyllysine. Positions Glu77–Asn184 are disordered. Polar residues-rich tracts occupy residues Gly80–Gln94 and Glu114–Pro130. Positions Asn127–Gln163 constitute a Peripheral subunit-binding (PSBD) domain. Basic and acidic residues predominate over residues Asp152–Gln163. The segment covering Gln164–Pro176 has biased composition (low complexity). Residues His393 and Asp397 contribute to the active site.

Belongs to the 2-oxoacid dehydrogenase family. As to quaternary structure, forms a 24-polypeptide structural core with octahedral symmetry. Part of the 2-oxoglutarate dehydrogenase (OGDH) complex composed of E1 (2-oxoglutarate dehydrogenase), E2 (dihydrolipoamide succinyltransferase) and E3 (dihydrolipoamide dehydrogenase); the complex contains multiple copies of the three enzymatic components (E1, E2 and E3). The cofactor is (R)-lipoate.

The catalysed reaction is N(6)-[(R)-dihydrolipoyl]-L-lysyl-[protein] + succinyl-CoA = N(6)-[(R)-S(8)-succinyldihydrolipoyl]-L-lysyl-[protein] + CoA. The protein operates within amino-acid degradation; L-lysine degradation via saccharopine pathway; glutaryl-CoA from L-lysine: step 6/6. Functionally, E2 component of the 2-oxoglutarate dehydrogenase (OGDH) complex which catalyzes the second step in the conversion of 2-oxoglutarate to succinyl-CoA and CO(2). The polypeptide is Dihydrolipoyllysine-residue succinyltransferase component of 2-oxoglutarate dehydrogenase complex (odhB) (Staphylococcus aureus (strain bovine RF122 / ET3-1)).